The chain runs to 165 residues: Endoribonuclease YbeY (165 aa).

Residues His130, His134, and His140 each contribute to the Zn(2+) site.

Belongs to the endoribonuclease YbeY family. Zn(2+) is required as a cofactor.

Its subcellular location is the cytoplasm. Functionally, single strand-specific metallo-endoribonuclease involved in late-stage 70S ribosome quality control and in maturation of the 3' terminus of the 16S rRNA. The polypeptide is Endoribonuclease YbeY (Streptococcus pyogenes serotype M1).